We begin with the raw amino-acid sequence, 561 residues long: 65 kDa phosphoprotein (561 aa).

Disordered regions lie at residues 389-475 and 534-561; these read DEGA…SDNE and AAQP…KHRG. Residues 395-411 show a composition bias toward acidic residues; sequence GDDDVWTSGSDSDEELV. The segment covering 440 to 449 has biased composition (low complexity); sequence ASSATACTSG. Acidic residues predominate over residues 464–473; that stretch reads PEEDTDEDSD. Ser472 carries the post-translational modification Phosphoserine. The Bipartite nuclear localization signal motif lies at 537–560; the sequence is PKRRRHRQDALPGPCIASTPKKHR.

It belongs to the herpesviridae pp65 family. Interacts with host NCL/nucleolin. Interacts with host IFI16. Interacts with host CGAS; this interaction inhibits CGAS enzymatic activity. Post-translationally, phosphorylation may play a role in the localization of the protein.

It is found in the virion tegument. The protein resides in the host nucleus. The protein localises to the host cytoplasm. In terms of biological role, counteracts the host antiviral immune response when activated and phosphorylated, by preventing host IRF3 from entering the nucleus. Also inhibits the type I interferon production by inactivating the enzymatic activity of DNA sensor CGAS without affecting STING1. Participates in the transactivation of viral major immediate-early genes by the recruitment of host IFI16 to the promoters pf these genes. The sequence is that of 65 kDa phosphoprotein (UL83) from Human cytomegalovirus (strain AD169) (HHV-5).